The chain runs to 354 residues: Interferon-inducible protein AIM2 (354 aa).

Residues Met-1 to Glu-87 enclose the Pyrin domain. A disordered region spans residues Asn-95–Asp-124. The segment covering Gln-109–Arg-120 has biased composition (polar residues). An HIN-200 domain is found at Met-144–Ile-341.

This sequence belongs to the HIN-200 family. As to quaternary structure, self-associates; forms homooligomers in response to cytosolic double-stranded DNA (dsDNA) and the dsDNA seems to serve as oligomerization platform. Component of AIM2 inflammasome, which consists of a signal sensor component (AIM2), an adapter (PYCARD/ASC), which recruits an effector pro-inflammatory caspase (CASP1). Interacts (via pyrin domain) with PYCARD/ASC (via pyrin domain); interaction is direct. Component of the AIM2 PANoptosome complex, a multiprotein complex that drives inflammatory cell death (PANoptosis). Interacts with EIF2AK2/PKR. Interacts with MAPRE1. Interacts (via HIN-200 domain) with IFI202 (via HIN-200 domain 2); preventing activation of the AIM2 inflammasome. Interacts with RACK1; promoting association with PP2A phosphatase and dephosphorylation of AKT1. Interacts with TRIM11; promoting AIM2 recruitment to autophagosomes and autophagy-dependent degradation. Post-translationally, degraded via selective autophagy following interaction with TRIM11. In terms of tissue distribution, expressed in developing neurons. Highly expressed in regulatory T-cells (Treg).

The protein localises to the cytoplasm. It is found in the inflammasome. Its subcellular location is the nucleus. With respect to regulation, inactive in absence of double-stranded DNA (dsDNA). Homooligomerizes upon binding to dsDNA, dsDNA serving as an oligomerization platform. AIM2 requires large dsDNA to generate a structural template that couples dsDNA ligand-binding and homooligomerization. Homooligomerization is followed by recruitment of PYCARD/ASC to initiate speck formation (nucleation). AIM2 and PYCARD/ASC homooligomer filaments assemble bidirectionally and the recognition between AIM2 and PYCARD/ASC oligomers occurs in a head-to-tail manner. Clustered PYCARD/ASC nucleates the formation of CASP1 filaments through the interaction of their respective CARD domains, acting as a platform for CASP1 polymerization and activation. Active CASP1 then specifically processes protein precursors, such as gasdermin-D (GSDMD), IL1B and IL18, leading to the release of mature cytokines in the extracellular milieu or pyroptosis, depending on cell type. AIM2 can be activated in response to events that cause genomic DNA (HIV protease inhibitor nelfinavir) or mitochondrial DNA release in the cytoplasm (such as Perfluoroalkyl substance pollutants or cholesterol overload). Activation of the AIM2 inflammasome is inhibited by IFI202. Activation of the AIM2 inflammasome is inhibited by TRIM11, which promotes autophagy-dependent degradation of AIM2. Its function is as follows. Sensor component of the AIM2 inflammasome, which mediates inflammasome activation in response to the presence of double-stranded DNA (dsDNA) in the cytosol, leading to subsequent pyroptosis. Inflammasomes are supramolecular complexes that assemble in the cytosol in response to pathogens and other damage-associated signals and play critical roles in innate immunity and inflammation. Acts as a recognition receptor (PRR): specifically recognizes and binds dsDNA in the cytosol, and mediates the formation of the inflammasome polymeric complex composed of AIM2, CASP1 and PYCARD/ASC. Recruitment of pro-caspase-1 (proCASP1) to the AIM2 inflammasome promotes caspase-1 (CASP1) activation, which subsequently cleaves and activates inflammatory cytokines IL1B and IL18 and gasdermin-D (GSDMD), promoting cytokine secretion. In some cells, CASP1 activation mediates cleavage and activation of GSDMD, triggering pyroptosis without promoting cytokine secretion. Detects cytosolic dsDNA of viral and bacterial origin in a non-sequence-specific manner. Involved in the DNA damage response caused by acute ionizing radiation by mediating pyroptosis of intestinal epithelial cells and bone marrow cells in response to double-strand DNA breaks. Mechanistically, AIM2 senses DNA damage in the nucleus to mediate inflammasome assembly and inflammatory cell death. Also acts as a regulator of neurodevelopment via its role in the DNA damage response: acts by promoting neural cell death in response to DNA damage in the developing brain, thereby purging genetically compromised cells of the central nervous system. Pyroptosis mediated by the AIM2 inflammasome in response to DNA damage is dependent on GSDMD without involving IL1B and IL18 cytokine secretion. Also acts as a mediator of pyroptosis, necroptosis and apoptosis (PANoptosis), an integral part of host defense against pathogens, in response to bacterial infection. Can also trigger PYCARD/ASC-dependent, caspase-1-independent cell death that involves caspase-8 (CASP8). In terms of biological role, also acts as a tumor suppressor independently of its role in inflammatory response. Able to suppress overt cell proliferation in enterocytes: restricts stem cell proliferation in the intestinal mucosa in an inflammasome-independent manner, contributing to a decrease in the likelihood of colorectal cancer development. AIM2 suppresses cell proliferation by inhibiting phosphorylation of AKT1 at 'Ser-473', preventing AKT1 activation and AKT-mTOR signaling pathway. Inhibits AKT1 phosphorylation both by inhibiting the activity of PRKDC/DNA-PK kinase and promoting dephosphorylation by PP2A phosphatase. Also acts as a key regulator of regulatory T-cells (Treg) homeostasis by promoting their stability: acts by preventing AKT1 activation. Its role in Treg homeostasis is important to restain autoimmune diseases. In Mus musculus (Mouse), this protein is Interferon-inducible protein AIM2.